Consider the following 256-residue polypeptide: Aspirochlorine biosynthesis protein F (256 aa).

Asparagine 19 carries an N-linked (GlcNAc...) asparagine glycan. Helical transmembrane passes span 21-41 (SITP…GPHF), 163-183 (LVWV…FFFT), and 214-234 (FGLG…ILAV).

The protein localises to the membrane. It participates in mycotoxin biosynthesis. Functionally, part of the gene cluster that mediates the biosynthesis of aspirochlorine (or antibiotic A30641), an unusual halogenated spiro compound with distinctive antifungal properties due to selective inhibition of protein biosynthesis, and which is also active against bacteria, viruses, and murine tumor cells. The non-ribosomal peptide synthetase (NRPS) aclP is responsible the formation of the diketopiperazine (DKP) core from the condensation of 2 phenylalanine residues. One Phe residue is tailored into chlorotyrosine by hydroxylation and chlorination, whereas the second Phe undergoes an unprecedented C-C bond cleavage to be converted into glycine. After formation of the DKP, sulfur is incorporated into the DKP by conjugation with glutathione by aclG, followed by its stepwise degradation to the thiol by aclI, aclJ and aclK, and the dithiol oxidation by aclT. In addition, oxygenases (aclB, aclC, aclL and aclO) and O-methyltransferases (aclM and aclU) act as tailoring enzymes to produce the intermediate dechloroaspirochlorine. Ultimately, chlorination of dechloroaspirochlorine by the halogenase aclH is the last step in the aspirochlorine pathway. This is Aspirochlorine biosynthesis protein F from Aspergillus oryzae (strain ATCC 42149 / RIB 40) (Yellow koji mold).